The primary structure comprises 157 residues: Cell number regulator 10 (157 aa).

2 helical membrane-spanning segments follow: residues 41-57 (DCGLCCLTCWCPCITFG) and 66-83 (GATSCGTAGALYAVLAYF).

It belongs to the cornifelin family. In terms of tissue distribution, expressed in roots, leaves, stalks, immature ears and silks.

It is found in the membrane. This is Cell number regulator 10 (CNR10) from Zea mays (Maize).